Reading from the N-terminus, the 1537-residue chain is Dicer-like protein 1 (1537 aa).

A disordered region spans residues 38 to 68 (SDPAESSVDVQDEHSSDDSDNENEVFPKQND). Residues 133-314 (LFERAKTQNT…EAATRLETFL (182 aa)) form the Helicase ATP-binding domain. ATP is bound at residue 146 to 153 (LDTGSGKT). A DEAH box motif is present at residues 259 to 262 (DEAH). The Helicase C-terminal domain occupies 459–618 (ELSKHFNDTT…EILPEDRILH (160 aa)). In terms of domain architecture, Dicer dsRNA-binding fold spans 651 to 741 (AIAILARYAS…NSIYHRRLPA (91 aa)). The PAZ domain maps to 891–1019 (DTVSFVHNND…ICAEPLRISA (129 aa)). RNase III domains are found at residues 1043–1202 (IALE…LSGG) and 1253–1405 (ARHV…VDSK). Mg(2+) contacts are provided by E1294, D1391, and E1394. The DRBM domain maps to 1439–1507 (TFLHNKLTNE…SEKALAVLDG (69 aa)). Residues C1451, H1478, C1519, and C1521 each contribute to the Zn(2+) site.

It belongs to the helicase family. Dicer subfamily. Mg(2+) is required as a cofactor. It depends on Mn(2+) as a cofactor.

Functionally, dicer-like endonuclease involved in cleaving double-stranded RNA in the RNA interference (RNAi) pathway. Produces 21 to 25 bp dsRNAs (siRNAs) which target the selective destruction of homologous RNAs leading to sequence-specific suppression of gene expression, called post-transcriptional gene silencing (PTGS). Part of a broad host defense response against viral infection and transposons. The polypeptide is Dicer-like protein 1 (dcl1) (Aspergillus fumigatus (strain ATCC MYA-4609 / CBS 101355 / FGSC A1100 / Af293) (Neosartorya fumigata)).